Here is a 266-residue protein sequence, read N- to C-terminus: ES1 protein homolog, mitochondrial (266 aa).

The transit peptide at 1–39 (MAAVRVLVSPRLASALLPLSGRHRTTSQRAAIHSSAPRP) directs the protein to the mitochondrion. 3 positions are modified to N6-acetyllysine: Lys149, Lys155, and Lys162. Lys201 carries the post-translational modification N6-acetyllysine; alternate. Lys201 bears the N6-succinyllysine; alternate mark. N6-acetyllysine is present on Lys217. N6-acetyllysine; alternate occurs at positions 221 and 231. 2 positions are modified to N6-succinyllysine; alternate: Lys221 and Lys231.

The protein belongs to the ES1 family.

Its subcellular location is the mitochondrion. In Rattus norvegicus (Rat), this protein is ES1 protein homolog, mitochondrial.